Consider the following 1183-residue polypeptide: Phospholipid-transporting ATPase FetA (1183 aa).

Transmembrane regions (helical) follow at residues 96–116 (ISSLAWYTTVIPLIVVLSITG), 299–319 (VLVVWIFMFLGGMCFLLSIGH), and 348–368 (ALIFWSYFIVLNTMVPISLYV). Catalysis depends on Asp416, which acts as the 4-aspartylphosphate intermediate. Positions 416, 417, 418, 519, 560, 583, 617, 697, 698, 699, 812, and 818 each coordinate ATP. Asp416 is a Mg(2+) binding site. Mg(2+) is bound at residue Thr418. Asp838 is a Mg(2+) binding site. ATP is bound by residues Asn841 and Asp842. Position 842 (Asp842) interacts with Mg(2+). The next 6 membrane-spanning stretches (helical) occupy residues 904–924 (FAFTLVHFWYAFFNGFSAQTV), 927–947 (IWFITFYNLIYTSLPVLGLSL), 981–1001 (CLLHGIYNSFVLFFVPMGTVF), 1014–1034 (FQSFSLLVQTTLIGVMTMQIA), 1049–1069 (WGSLGLYFCILILLCSDGLCL), and 1090–1110 (IWLCLILSTILCMIPLIGYNF).

The protein belongs to the cation transport ATPase (P-type) (TC 3.A.3) family. Type IV subfamily. Mg(2+) is required as a cofactor. Highly expressed in testis.

Its subcellular location is the cytoplasmic vesicle. It localises to the secretory vesicle. The protein localises to the acrosome membrane. The enzyme catalyses ATP + H2O + phospholipidSide 1 = ADP + phosphate + phospholipidSide 2.. P4-ATPase flippase which catalyzes the hydrolysis of ATP coupled to the transport of aminophospholipids from the outer to the inner leaflet of various membranes and ensures the maintenance of asymmetric distribution of phospholipids. Phospholipid translocation also seems to be implicated in vesicle formation and in uptake of lipid signaling molecules. May play a role in phospholid transport across membranes and in acrosome formation. The sequence is that of Phospholipid-transporting ATPase FetA (Atp8b5) from Mus musculus (Mouse).